Consider the following 135-residue polypeptide: Probable transporter XF_0766 (135 aa).

4 helical membrane-spanning segments follow: residues 4 to 24 (YWYPILGGILLGLSTVMLLLL), 45 to 65 (AQDIPFVVGLVLGPLVFSVIF), 71 to 91 (VTVAATWPTIIVAGLLVGLGT), and 114 to 134 (IVATAIFLISGMATATFMGVY).

The protein belongs to the TsuA/YedE (TC 9.B.102) family.

Its subcellular location is the cell inner membrane. In Xylella fastidiosa (strain 9a5c), this protein is Probable transporter XF_0766.